The following is a 473-amino-acid chain: Double-stranded RNA-binding protein 7 (473 aa).

A compositionally biased stretch (pro residues) spans 1–10 (MDMPPTPLPP). A disordered region spans residues 1 to 22 (MDMPPTPLPPETANTSPAPNGA). DRBM domains follow at residues 33-102 (VFKS…EIVK) and 118-185 (LCKN…AIQG). Composition is skewed to basic and acidic residues over residues 286–307 (KRVEAEPPRDIEMVQPDKENQH), 317–327 (DEARVEQEPSR), and 416–427 (VDARVVKEESPR). Disordered stretches follow at residues 286 to 329 (KRVE…SRDI) and 393 to 473 (QLNE…MSEE). A compositionally biased stretch (polar residues) spans 433 to 450 (EATNMKETPKNSAVCNSP).

Its function is as follows. Binds double-stranded RNA. The polypeptide is Double-stranded RNA-binding protein 7 (DRB7) (Oryza sativa subsp. japonica (Rice)).